Reading from the N-terminus, the 156-residue chain is ATP synthase subunit b (156 aa).

A helical transmembrane segment spans residues 12–32 (VAFFIFVLFCMKFVWPPVIAA).

Belongs to the ATPase B chain family. F-type ATPases have 2 components, F(1) - the catalytic core - and F(0) - the membrane proton channel. F(1) has five subunits: alpha(3), beta(3), gamma(1), delta(1), epsilon(1). F(0) has three main subunits: a(1), b(2) and c(10-14). The alpha and beta chains form an alternating ring which encloses part of the gamma chain. F(1) is attached to F(0) by a central stalk formed by the gamma and epsilon chains, while a peripheral stalk is formed by the delta and b chains.

It is found in the cell inner membrane. Its function is as follows. F(1)F(0) ATP synthase produces ATP from ADP in the presence of a proton or sodium gradient. F-type ATPases consist of two structural domains, F(1) containing the extramembraneous catalytic core and F(0) containing the membrane proton channel, linked together by a central stalk and a peripheral stalk. During catalysis, ATP synthesis in the catalytic domain of F(1) is coupled via a rotary mechanism of the central stalk subunits to proton translocation. In terms of biological role, component of the F(0) channel, it forms part of the peripheral stalk, linking F(1) to F(0). The chain is ATP synthase subunit b from Pseudomonas syringae pv. syringae (strain B728a).